A 355-amino-acid polypeptide reads, in one-letter code: Inositol-tetrakisphosphate 1-kinase 4 (355 aa).

K65 lines the 1D-myo-inositol 1,3,4-trisphosphate pocket. ATP is bound by residues R101 and K146. Positions 107 to 318 constitute an ATP-grasp domain; it reads VVSGLRTPVS…FFLEMLRGTR (212 aa). H157 and K190 together coordinate 1D-myo-inositol 1,3,4-trisphosphate. ATP-binding positions include 179–190 and S205; that span reads QEFVNHGGVLFK. The disordered stretch occupies residues 225 to 248; it reads FANISNQPLPPPDDDGGAADDDTP. The span at 236-247 shows a compositional bias: acidic residues; that stretch reads PDDDGGAADDDT. Residues D272, D289, and N291 each coordinate Mg(2+). 1D-myo-inositol 1,3,4-trisphosphate is bound at residue N291.

This sequence belongs to the ITPK1 family. In terms of assembly, monomer. Requires Mg(2+) as cofactor.

It catalyses the reaction 1D-myo-inositol 3,4,5,6-tetrakisphosphate + ATP = 1D-myo-inositol 1,3,4,5,6-pentakisphosphate + ADP + H(+). It carries out the reaction 1D-myo-inositol 1,3,4-trisphosphate + ATP = 1D-myo-inositol 1,3,4,5-tetrakisphosphate + ADP + H(+). The enzyme catalyses 1D-myo-inositol 1,3,4-trisphosphate + ATP = 1D-myo-inositol 1,3,4,6-tetrakisphosphate + ADP + H(+). Kinase that can phosphorylate various inositol polyphosphate such as Ins(3,4,5,6)P4 or Ins(1,3,4)P3 and participates in phytic acid biosynthesis in developing seeds. Phytic acid is the primary storage form of phosphorus in cereal grains and other plant seeds. The protein is Inositol-tetrakisphosphate 1-kinase 4 (ITPK4) of Oryza sativa subsp. indica (Rice).